Reading from the N-terminus, the 375-residue chain is Phytanoyl-CoA hydroxylase-interacting protein-like (375 aa).

S11, S12, and S15 each carry phosphoserine. The N-linked (GlcNAc...) asparagine glycan is linked to N22. S24 bears the Phosphoserine mark. N36 carries N-linked (GlcNAc...) asparagine glycosylation. The Fibronectin type-III domain occupies V51–Y160.

Belongs to the PHYHIP family.

Its function is as follows. May play a role in the development of the central system. In Rattus norvegicus (Rat), this protein is Phytanoyl-CoA hydroxylase-interacting protein-like (Phyhipl).